Reading from the N-terminus, the 92-residue chain is Small ribosomal subunit protein bS20 (92 aa).

Positions 1–23 are disordered; sequence MANSPSAKKRAKQAEKRRSHNAS. Basic residues predominate over residues 7-20; the sequence is AKKRAKQAEKRRSH.

Belongs to the bacterial ribosomal protein bS20 family.

Its function is as follows. Binds directly to 16S ribosomal RNA. The protein is Small ribosomal subunit protein bS20 of Ectopseudomonas mendocina (strain ymp) (Pseudomonas mendocina).